The sequence spans 597 residues: MRSQGTCDNAAAMSGILKRKFEDVDASSPCSSARESDDEVSSSESADSGDSVNPSTSNHFTPSSILKREKRLRTKNVHFSCVTVYYFTRRQGFTSVPSQGGSTLGMSSRHNSVRQYTLGEFAREQERLHREMLREHLREEKLNSLKLKMTKNGTVESEEASTLTVDDISDDDIDLDNTEVDEYFFLQPLPTKKRRALLRASGVKKIDVDEKHELRAIRLSREDCGCDCRVFCDPETCTCSLAGIKCQVDRMSFPCGCTKEGCSNTAGRIEFNPIRVRTHFLHTIMKLELEKNREQQTPTLNGCHGEISAHGPSMGPVAHSVEYSIADNFEIETEPQAAVLHLQEELDCQGDEEEEEEDGSSFCSGATDSSTQSLAPSESDEEEEEEEEEEEEEEEDDDDDKGDGFVEGLGAHTEVVPLPSVLCYSDGTAVHESHTKNASFYASSSTLYYQIDSHIPGTPSQLSDNYSERDTVKNGALSLVPYAMTPERFVDYARQAEEAYGASHYPAANPSVIVCCPTSENDSGVPCNPLYPEHRSNLPQVEFHSYLKGPAQEGFVSTLNGDSHISEHPAENPLSLAEKSRLHEECIQSPVVETVPV.

Disordered stretches follow at residues 22 to 64 (EDVD…TPSS) and 348 to 407 (CQGD…GFVE). A compositionally biased stretch (low complexity) spans 42–52 (SSESADSGDSV). A compositionally biased stretch (polar residues) spans 53–64 (NPSTSNHFTPSS). Acidic residues predominate over residues 348–359 (CQGDEEEEEEDG). Residues 361–376 (SFCSGATDSSTQSLAP) show a composition bias toward polar residues. Acidic residues predominate over residues 378–401 (ESDEEEEEEEEEEEEEEEDDDDDK).

It belongs to the AXUD1 family. Detected only in the brain of 15 dpc, 18 dpc, newborn and P6 mice (at protein level).

Its subcellular location is the nucleus. Functionally, binds to the consensus sequence 5'-AGAGTG-3' and has transcriptional activator activity. Plays a role in apoptosis. The polypeptide is Cysteine/serine-rich nuclear protein 3 (Csrnp3) (Mus musculus (Mouse)).